A 157-amino-acid chain; its full sequence is uncharacterized protein (157 aa).

Residues 1–30 (MLPEQGPQPSTMPLWCLLAACTSLPRQAAT) form the signal peptide.

It is found in the secreted. This is an uncharacterized protein from Homo sapiens (Human).